The following is an 898-amino-acid chain: DNA gyrase subunit A (898 aa).

2 disordered regions span residues 1–22 (MSDD…DDDS) and 36–56 (EEEK…EKEG). Residues 97–562 (LPDARDGLKP…VMSSINNEDL (466 aa)) form the Topo IIA-type catalytic domain. The active-site O-(5'-phospho-DNA)-tyrosine intermediate is Tyr-185. The short motif at 589-595 (QRRGGVG) is the GyrA-box element.

Belongs to the type II topoisomerase GyrA/ParC subunit family. In terms of assembly, heterotetramer, composed of two GyrA and two GyrB chains. In the heterotetramer, GyrA contains the active site tyrosine that forms a transient covalent intermediate with DNA, while GyrB binds cofactors and catalyzes ATP hydrolysis.

The protein resides in the cytoplasm. The catalysed reaction is ATP-dependent breakage, passage and rejoining of double-stranded DNA.. A type II topoisomerase that negatively supercoils closed circular double-stranded (ds) DNA in an ATP-dependent manner to modulate DNA topology and maintain chromosomes in an underwound state. Negative supercoiling favors strand separation, and DNA replication, transcription, recombination and repair, all of which involve strand separation. Also able to catalyze the interconversion of other topological isomers of dsDNA rings, including catenanes and knotted rings. Type II topoisomerases break and join 2 DNA strands simultaneously in an ATP-dependent manner. The polypeptide is DNA gyrase subunit A (Metamycoplasma arthritidis (strain 158L3-1) (Mycoplasma arthritidis)).